We begin with the raw amino-acid sequence, 685 residues long: Protein DIA2 (685 aa).

TPR repeat units lie at residues I6–Y39, L70–N103, and L104–A137. Positions I207–F254 constitute an F-box domain. 7 LRR repeats span residues I300 to E323, K353 to T377, M454 to V480, F499 to V517, F518 to P542, A562 to N585, and R598 to L622.

Belongs to the DIA2 family. As to quaternary structure, forms a SCF ubiquitin ligase complex which binds to DNA replication origins.

Its subcellular location is the nucleus. F-box protein component of a SCF ubiquitin ligase complex involved in ubiquitin-dependent protein degradation. The SCF-DIA2 complex is specifically involved in the pheromone induced degradation of phosphorylated TEC1. Involved in DNA replication, genome stability, and the control of cell cycle, probably through its association to replication origins to facilitate the ubiquitination of another origin-binding protein. The protein is Protein DIA2 (DIA2) of Eremothecium gossypii (strain ATCC 10895 / CBS 109.51 / FGSC 9923 / NRRL Y-1056) (Yeast).